A 192-amino-acid polypeptide reads, in one-letter code: Imidazoleglycerol-phosphate dehydratase (192 aa).

Belongs to the imidazoleglycerol-phosphate dehydratase family.

It localises to the cytoplasm. The enzyme catalyses D-erythro-1-(imidazol-4-yl)glycerol 3-phosphate = 3-(imidazol-4-yl)-2-oxopropyl phosphate + H2O. It functions in the pathway amino-acid biosynthesis; L-histidine biosynthesis; L-histidine from 5-phospho-alpha-D-ribose 1-diphosphate: step 6/9. This is Imidazoleglycerol-phosphate dehydratase from Hydrogenobaculum sp. (strain Y04AAS1).